A 422-amino-acid polypeptide reads, in one-letter code: UDP-N-acetylmuramoylalanine--D-glutamate ligase (422 aa).

102 to 108 (GTNGKTT) contacts ATP.

It belongs to the MurCDEF family.

It is found in the cytoplasm. The catalysed reaction is UDP-N-acetyl-alpha-D-muramoyl-L-alanine + D-glutamate + ATP = UDP-N-acetyl-alpha-D-muramoyl-L-alanyl-D-glutamate + ADP + phosphate + H(+). It functions in the pathway cell wall biogenesis; peptidoglycan biosynthesis. In terms of biological role, cell wall formation. Catalyzes the addition of glutamate to the nucleotide precursor UDP-N-acetylmuramoyl-L-alanine (UMA). This Helicobacter pylori (strain J99 / ATCC 700824) (Campylobacter pylori J99) protein is UDP-N-acetylmuramoylalanine--D-glutamate ligase.